The chain runs to 49 residues: Large ribosomal subunit protein bL33 (49 aa).

This sequence belongs to the bacterial ribosomal protein bL33 family.

This chain is Large ribosomal subunit protein bL33, found in Natranaerobius thermophilus (strain ATCC BAA-1301 / DSM 18059 / JW/NM-WN-LF).